Consider the following 163-residue polypeptide: 2-C-methyl-D-erythritol 2,4-cyclodiphosphate synthase (163 aa).

2 residues coordinate a divalent metal cation: Asp-12 and His-14. 4-CDP-2-C-methyl-D-erythritol 2-phosphate contacts are provided by residues 12-14 (DVH) and 38-39 (HS). His-46 is an a divalent metal cation binding site. Residues 60–62 (DIG), 136–139 (TTSE), Phe-143, and Arg-146 contribute to the 4-CDP-2-C-methyl-D-erythritol 2-phosphate site.

It belongs to the IspF family. Homotrimer. The cofactor is a divalent metal cation.

It catalyses the reaction 4-CDP-2-C-methyl-D-erythritol 2-phosphate = 2-C-methyl-D-erythritol 2,4-cyclic diphosphate + CMP. It participates in isoprenoid biosynthesis; isopentenyl diphosphate biosynthesis via DXP pathway; isopentenyl diphosphate from 1-deoxy-D-xylulose 5-phosphate: step 4/6. Functionally, involved in the biosynthesis of isopentenyl diphosphate (IPP) and dimethylallyl diphosphate (DMAPP), two major building blocks of isoprenoid compounds. Catalyzes the conversion of 4-diphosphocytidyl-2-C-methyl-D-erythritol 2-phosphate (CDP-ME2P) to 2-C-methyl-D-erythritol 2,4-cyclodiphosphate (ME-CPP) with a corresponding release of cytidine 5-monophosphate (CMP). This Xanthomonas campestris pv. campestris (strain 8004) protein is 2-C-methyl-D-erythritol 2,4-cyclodiphosphate synthase.